Consider the following 449-residue polypeptide: Glutamate--tRNA ligase (449 aa).

The short motif at 10-20 (PSPTGFLHIGN) is the 'HIGH' region element. A 'KMSKS' region motif is present at residues 214–218 (KLSKR). An ATP-binding site is contributed by K217.

This sequence belongs to the class-I aminoacyl-tRNA synthetase family. Glutamate--tRNA ligase type 1 subfamily. Monomer.

It is found in the cytoplasm. It catalyses the reaction tRNA(Glu) + L-glutamate + ATP = L-glutamyl-tRNA(Glu) + AMP + diphosphate. Catalyzes the attachment of glutamate to tRNA(Glu) in a two-step reaction: glutamate is first activated by ATP to form Glu-AMP and then transferred to the acceptor end of tRNA(Glu). The sequence is that of Glutamate--tRNA ligase from Onion yellows phytoplasma (strain OY-M).